The sequence spans 444 residues: Methylenetetrahydrofolate--tRNA-(uracil-5-)-methyltransferase TrmFO (444 aa).

FAD is bound at residue 9 to 14 (GAGMAG).

It belongs to the MnmG family. TrmFO subfamily. FAD is required as a cofactor.

It is found in the cytoplasm. The catalysed reaction is uridine(54) in tRNA + (6R)-5,10-methylene-5,6,7,8-tetrahydrofolate + NADH + H(+) = 5-methyluridine(54) in tRNA + (6S)-5,6,7,8-tetrahydrofolate + NAD(+). It carries out the reaction uridine(54) in tRNA + (6R)-5,10-methylene-5,6,7,8-tetrahydrofolate + NADPH + H(+) = 5-methyluridine(54) in tRNA + (6S)-5,6,7,8-tetrahydrofolate + NADP(+). In terms of biological role, catalyzes the folate-dependent formation of 5-methyl-uridine at position 54 (M-5-U54) in all tRNAs. In Cereibacter sphaeroides (strain KD131 / KCTC 12085) (Rhodobacter sphaeroides), this protein is Methylenetetrahydrofolate--tRNA-(uracil-5-)-methyltransferase TrmFO.